Reading from the N-terminus, the 1220-residue chain is ATP-dependent helicase/deoxyribonuclease subunit B (1220 aa).

The 281-residue stretch at 1 to 281 (MSMRFIVGRA…VFLTETHRFE (281 aa)) folds into the UvrD-like helicase ATP-binding domain. Position 8–15 (8–15 (GRAGTGKS)) interacts with ATP. Positions 283 to 590 (AGLKHLERFY…LVGSLDRSRN (308 aa)) constitute a UvrD-like helicase C-terminal domain. C788 provides a ligand contact to [4Fe-4S] cluster. The tract at residues 989–1008 (LAEGSKGSEGSEGSEDSEDS) is disordered. 3 residues coordinate [4Fe-4S] cluster: C1128, C1131, and C1137. Residues 1162–1171 (RVQSQDSEQY) show a composition bias toward polar residues. The tract at residues 1162-1220 (RVQSQDSEQYPEQHPPTSVPGETSRRALQKDGGNSPRGQELIWLGEDEAGAGKEDDGHE) is disordered. A compositionally biased stretch (basic and acidic residues) spans 1211 to 1220 (GAGKEDDGHE).

Belongs to the helicase family. AddB/RexB type 1 subfamily. Heterodimer of AddA and AddB. It depends on Mg(2+) as a cofactor. [4Fe-4S] cluster serves as cofactor.

Functionally, the heterodimer acts as both an ATP-dependent DNA helicase and an ATP-dependent, dual-direction single-stranded exonuclease. Recognizes the chi site generating a DNA molecule suitable for the initiation of homologous recombination. The AddB subunit has 5' -&gt; 3' nuclease activity but not helicase activity. The sequence is that of ATP-dependent helicase/deoxyribonuclease subunit B from Desulfitobacterium hafniense (strain Y51).